The following is a 1840-amino-acid chain: Sodium channel protein type 4 subunit alpha (1840 aa).

Residues 1–131 (MASSSLPNLV…RVAIKVLIHA (131 aa)) lie on the Cytoplasmic side of the membrane. Residues 36–60 (EARLQRNKQMEIEEPERKPRSDLEA) show a composition bias toward basic and acidic residues. The segment at 36–63 (EARLQRNKQMEIEEPERKPRSDLEAGKN) is disordered. An I repeat occupies 113-448 (LLSPFSIVRR…VVAMAYAEQN (336 aa)). Residues 132 to 150 (LFSMFIMITILTNCVFMTM) traverse the membrane as a helical segment. The Extracellular portion of the chain corresponds to 151-157 (SNPPSWS). A helical transmembrane segment spans residues 158 to 178 (KHVEYTFTGIYTFESLIKMLA). Residues 179 to 192 (RGFCIDDFTFLRDP) are Cytoplasmic-facing. A helical transmembrane segment spans residues 193-210 (WNWLDFSVITMAYVTEFV). Topologically, residues 211–216 (DLGNIS) are extracellular. The chain crosses the membrane as a helical span at residues 217–233 (ALRTFRVLRALKTITVI). Topologically, residues 234-252 (PGLKTIVGALIQSVKKLSD) are cytoplasmic. A helical membrane pass occupies residues 253–272 (VMILTVFCLSVFALVGLQLF). At 273–385 (MGNLRQKCVR…PNYGYTSYDT (113 aa)) the chain is on the extracellular side. Cysteine 280 and cysteine 354 are joined by a disulfide. N-linked (GlcNAc...) asparagine glycans are attached at residues asparagine 288, asparagine 291, asparagine 297, asparagine 303, asparagine 309, asparagine 315, asparagine 327, and asparagine 356. The cysteines at positions 363 and 369 are disulfide-linked. The pore-forming intramembrane region spans 386-410 (FSWAFLALFRLMTQDYWENLFQLTL). Over 411–417 (RAAGKTY) the chain is Extracellular. Residues 418–438 (MIFFVVIIFLGSFYLINLILA) form a helical membrane-spanning segment. Residues 439–572 (VVAMAYAEQN…HIIYLIVMDP (134 aa)) are Cytoplasmic-facing. A disordered region spans residues 481–522 (AAQALESGEEADGDPTHNKDCNGSLDASGEKGPPRPSCSADS). The residue at position 487 (serine 487) is a Phosphoserine. Residues 554 to 826 (CCAPWVKFKH…QIAIGRIKWG (273 aa)) form an II repeat. A helical transmembrane segment spans residues 573-591 (FVDLGITICIVLNTLFMAM). Residues 592-602 (EHYPMTEHFDN) lie on the Extracellular side of the membrane. The helical transmembrane segment at 603-622 (VLSVGNLVFTGIFTAEMVLK) threads the bilayer. The Cytoplasmic segment spans residues 623–636 (LIAMDPYEYFQQGW). Residues 637-656 (NIFDSFIVTLSLVELGLANV) traverse the membrane as a helical segment. The Extracellular portion of the chain corresponds to 657–658 (QG). A helical transmembrane segment spans residues 659–676 (LSVLRSFRLLRVFKLAKS). Over 677–692 (WPTLNMLIKIIGNSVG) the chain is Cytoplasmic. A helical transmembrane segment spans residues 693 to 711 (ALGNLTLVLAIIVFIFAVV). Residues 712–740 (GMQLFGKSYKECVCKIASDCNLPRWHMND) are Extracellular-facing. A disulfide bridge links cysteine 725 with cysteine 731. The segment at residues 741 to 761 (FFHSFLIVFRILCGEWIETMW) is an intramembrane region (pore-forming). Residues 762–772 (DCMEVAGQAMC) are Extracellular-facing. Residues cysteine 763 and cysteine 772 are joined by a disulfide bond. Residues 773–791 (LTVFLMVMVIGNLVVLNLF) traverse the membrane as a helical segment. The Cytoplasmic portion of the chain corresponds to 792-1025 (LALLLSSFSA…ACFKIVEHNW (234 aa)). Disordered regions lie at residues 854-884 (EPGG…LKDN) and 925-983 (DLEM…GEQP). The span at 868–884 (EDEKKEPPPEDKELKDN) shows a compositional bias: basic and acidic residues. Acidic residues-rich tracts occupy residues 925 to 940 (DLEM…FSEP) and 968 to 983 (EDPE…GEQP). One copy of the III repeat lies at 1006–1319 (RGKMWWTLRR…KKYYNAMKKL (314 aa)). Residues 1026-1043 (FETFIVFMILLSSGALAF) form a helical membrane-spanning segment. At 1044 to 1056 (EDIYIEQRRVIRT) the chain is on the extracellular side. A helical transmembrane segment spans residues 1057–1075 (ILEYADKVFTYIFILEMLL). At 1076-1089 (KWVAYGFKVYFTNA) the chain is on the cytoplasmic side. The chain crosses the membrane as a helical span at residues 1090 to 1108 (WCWLDFLIVDVSIISLVAN). Residues 1109-1116 (WLGYSELG) are Extracellular-facing. Residues 1117-1135 (PIKSLRTLRALRPLRALSR) form a helical membrane-spanning segment. Topologically, residues 1136–1152 (FEGMRVVVNALLGAIPS) are cytoplasmic. A helical membrane pass occupies residues 1153–1172 (IMNVLLVCLIFWLIFSIMGV). Residues 1173-1223 (NLFAGKFYYCVNTTTSERFDISVVNNKSESESLMYTGQVRWMNVKVNYDNV) are Extracellular-facing. Asparagine 1198 is a glycosylation site (N-linked (GlcNAc...) asparagine). The segment at residues 1224-1245 (GLGYLSLLQVATFKGWMDIMYA) is an intramembrane region (pore-forming). Residues 1246-1262 (AVDSREKEEQPHYEVNL) lie on the Extracellular side of the membrane. The chain crosses the membrane as a helical span at residues 1263 to 1284 (YMYLYFVIFIIFGSFFTLNLFI). The Cytoplasmic portion of the chain corresponds to 1285–1347 (GVIIDNFNQQ…MVYDFVTKQV (63 aa)). Residues 1303-1305 (IFM) are important for rapid channel inactivation. One copy of the IV repeat lies at 1328–1626 (IPRPQNKIQG…WEKFDPDATQ (299 aa)). The chain crosses the membrane as a helical span at residues 1348 to 1365 (FDISIMILICLNMVTMMV). Residues 1366–1376 (ETDDQSQLKVD) lie on the Extracellular side of the membrane. Residues 1377–1395 (ILYNINMVFIIIFTGECVL) form a helical membrane-spanning segment. Residues 1396 to 1407 (KMFALRHYYFTI) are Cytoplasmic-facing. The chain crosses the membrane as a helical span at residues 1408-1425 (GWNIFDFVVVILSIVGLA). Residues 1426 to 1438 (LSDLIQKYFVSPT) lie on the Extracellular side of the membrane. The helical transmembrane segment at 1439-1455 (LFRVIRLARIGRVLRLI) threads the bilayer. Over 1456 to 1474 (RGAKGIRTLLFALMMSLPA) the chain is Cytoplasmic. A helical membrane pass occupies residues 1475–1492 (LFNIGLLLFLVMFIYSIF). Residues 1493-1514 (GMSNFAYVKKESGIDDMFNFET) lie on the Extracellular side of the membrane. The pore-forming intramembrane region spans 1515-1537 (FGNSIICLFEITTSAGWDGLLNP). Over 1538–1567 (ILNSGPPDCDPTLENPGTNVRGDCGNPSIG) the chain is Extracellular. A disulfide bond links cysteine 1546 and cysteine 1561. The helical transmembrane segment at 1568–1590 (ICFFCSYIIISFLIVVNMYIAII) threads the bilayer. Residues 1591–1840 (LENFNVATEE…VRPGVKESLV (250 aa)) lie on the Cytoplasmic side of the membrane. An IQ domain is found at 1720–1749 (EEVCAIKIQRAYRRHLLQRSVKQASYMYRH). The tract at residues 1775–1840 (HEKEGDGVQS…VRPGVKESLV (66 aa)) is disordered. A compositionally biased stretch (low complexity) spans 1804–1813 (PTSSSDTALT). The segment covering 1814–1824 (PSPPPLPPSSS) has biased composition (pro residues).

The protein belongs to the sodium channel (TC 1.A.1.10) family. Nav1.4/SCN4A subfamily. In terms of assembly, the Nav1.4 voltage-gated sodium channel consists of an ion-conducting alpha subunit SCN4A which is functional on its own and a regulatory beta subunit SCN1B. SCN1B strongly enhances the presence of SCN4A at the cell surface. SCN1B is also required for rapid channel inactivation and recovery after inactivation. It prevents the decrease of channel activity in response to repetitive, high-frequency depolarizations. Interacts with the syntrophins SNTA1, SNTB1 and SNTB2 (via PDZ domain); probably links SCN4A to the actin cytoskeleton and the extracellular matrix via the dystrophin-associated protein complex and regulates its localization in muscle cells. Interacts with TMEM233; probable regulator of the channel. In terms of tissue distribution, detected in skeletal muscle.

The protein resides in the cell membrane. The enzyme catalyses Na(+)(in) = Na(+)(out). Its activity is regulated as follows. Potently inhibited by tetrodotoxin and saxitoxin. Inhibited by the conotoxin GVIIJ. Its function is as follows. Pore-forming subunit of Nav1.4, a voltage-gated sodium (Nav) channel that directly mediates the depolarizing phase of action potentials in excitable membranes. Navs, also called VGSCs (voltage-gated sodium channels) or VDSCs (voltage-dependent sodium channels), operate by switching between closed and open conformations depending on the voltage difference across the membrane. In the open conformation they allow Na(+) ions to selectively pass through the pore, along their electrochemical gradient. The influx of Na+ ions provokes membrane depolarization, initiating the propagation of electrical signals throughout cells and tissues. Highly expressed in skeletal muscles, Nav1.4 generates the action potential crucial for muscle contraction. The polypeptide is Sodium channel protein type 4 subunit alpha (Rattus norvegicus (Rat)).